Here is a 352-residue protein sequence, read N- to C-terminus: Uroporphyrinogen decarboxylase (352 aa).

Residues R26–R30, D76, Y153, S208, and H323 contribute to the substrate site.

Belongs to the uroporphyrinogen decarboxylase family. As to quaternary structure, homodimer.

The protein resides in the cytoplasm. The enzyme catalyses uroporphyrinogen III + 4 H(+) = coproporphyrinogen III + 4 CO2. Its pathway is porphyrin-containing compound metabolism; protoporphyrin-IX biosynthesis; coproporphyrinogen-III from 5-aminolevulinate: step 4/4. In terms of biological role, catalyzes the decarboxylation of four acetate groups of uroporphyrinogen-III to yield coproporphyrinogen-III. This chain is Uroporphyrinogen decarboxylase, found in Prochlorococcus marinus (strain NATL1A).